A 322-amino-acid polypeptide reads, in one-letter code: Sulfate adenylyltransferase subunit 2 (322 aa).

It belongs to the PAPS reductase family. CysD subfamily. As to quaternary structure, heterodimer composed of CysD, the smaller subunit, and CysN.

The catalysed reaction is sulfate + ATP + H(+) = adenosine 5'-phosphosulfate + diphosphate. It participates in sulfur metabolism; hydrogen sulfide biosynthesis; sulfite from sulfate: step 1/3. In terms of biological role, with CysN forms the ATP sulfurylase (ATPS) that catalyzes the adenylation of sulfate producing adenosine 5'-phosphosulfate (APS) and diphosphate, the first enzymatic step in sulfur assimilation pathway. APS synthesis involves the formation of a high-energy phosphoric-sulfuric acid anhydride bond driven by GTP hydrolysis by CysN coupled to ATP hydrolysis by CysD. The chain is Sulfate adenylyltransferase subunit 2 from Bradyrhizobium sp. (strain BTAi1 / ATCC BAA-1182).